The sequence spans 311 residues: Malate dehydrogenase (311 aa).

Residues 7-13 (GAAGGIG) and aspartate 34 each bind NAD(+). Substrate-binding residues include arginine 81 and arginine 87. NAD(+) is bound by residues asparagine 94 and 117 to 119 (ITN). Asparagine 119 and arginine 153 together coordinate substrate. The active-site Proton acceptor is the histidine 177. Residue methionine 227 coordinates NAD(+).

The protein belongs to the LDH/MDH superfamily. MDH type 1 family. As to quaternary structure, homodimer.

The enzyme catalyses (S)-malate + NAD(+) = oxaloacetate + NADH + H(+). Catalyzes the reversible oxidation of malate to oxaloacetate. The chain is Malate dehydrogenase from Haemophilus influenzae (strain 86-028NP).